The following is a 73-amino-acid chain: Translation initiation factor IF-1 2 (73 aa).

The region spanning 1–72 (MAKEELVEFG…TKGRINYRHK (72 aa)) is the S1-like domain.

This sequence belongs to the IF-1 family. In terms of assembly, component of the 30S ribosomal translation pre-initiation complex which assembles on the 30S ribosome in the order IF-2 and IF-3, IF-1 and N-formylmethionyl-tRNA(fMet); mRNA recruitment can occur at any time during PIC assembly.

The protein localises to the cytoplasm. Functionally, one of the essential components for the initiation of protein synthesis. Stabilizes the binding of IF-2 and IF-3 on the 30S subunit to which N-formylmethionyl-tRNA(fMet) subsequently binds. Helps modulate mRNA selection, yielding the 30S pre-initiation complex (PIC). Upon addition of the 50S ribosomal subunit IF-1, IF-2 and IF-3 are released leaving the mature 70S translation initiation complex. The polypeptide is Translation initiation factor IF-1 2 (Cupriavidus pinatubonensis (strain JMP 134 / LMG 1197) (Cupriavidus necator (strain JMP 134))).